The sequence spans 65 residues: Prokaryotic ubiquitin-like protein Pup (65 aa).

Positions 1-38 (MANAQQQVFGGGGGDDAENNDAPQQGSGTQQVNVTGTD) are disordered. Residues 21–59 (DAPQQGSGTQQVNVTGTDDLLDEIDGLLETNAEEFVRSY) are ARC ATPase binding. The span at 22-34 (APQQGSGTQQVNV) shows a compositional bias: polar residues. Gln-65 is subject to Deamidated glutamine. Residue Gln-65 forms an Isoglutamyl lysine isopeptide (Gln-Lys) (interchain with K-? in acceptor proteins) linkage.

The protein belongs to the prokaryotic ubiquitin-like protein family. In terms of assembly, strongly interacts with the proteasome-associated ATPase ARC through a hydrophobic interface; the interacting region of Pup lies in its C-terminal half. There is one Pup binding site per ARC hexamer ring. Is modified by deamidation of its C-terminal glutamine to glutamate by the deamidase Dop, a prerequisite to the subsequent pupylation process.

It functions in the pathway protein degradation; proteasomal Pup-dependent pathway. Its function is as follows. Protein modifier that is covalently attached to lysine residues of substrate proteins, thereby targeting them for proteasomal degradation. The tagging system is termed pupylation. This chain is Prokaryotic ubiquitin-like protein Pup, found in Corynebacterium urealyticum (strain ATCC 43042 / DSM 7109).